The sequence spans 154 residues: Deoxyuridine 5'-triphosphate nucleotidohydrolase (154 aa).

Residues 64–66 (RSG), N77, 81–83 (TVD), and K91 each bind substrate. Positions 135 to 154 (LADTTRGDGGHGSSGGHASL) are disordered. Positions 144-154 (GHGSSGGHASL) are enriched in gly residues.

Belongs to the dUTPase family. Homotrimer. It depends on Mg(2+) as a cofactor.

It carries out the reaction dUTP + H2O = dUMP + diphosphate + H(+). The protein operates within pyrimidine metabolism; dUMP biosynthesis; dUMP from dCTP (dUTP route): step 2/2. Its function is as follows. This enzyme is involved in nucleotide metabolism: it produces dUMP, the immediate precursor of thymidine nucleotides and it decreases the intracellular concentration of dUTP so that uracil cannot be incorporated into DNA. This is Deoxyuridine 5'-triphosphate nucleotidohydrolase from Mycolicibacterium vanbaalenii (strain DSM 7251 / JCM 13017 / BCRC 16820 / KCTC 9966 / NRRL B-24157 / PYR-1) (Mycobacterium vanbaalenii).